A 147-amino-acid polypeptide reads, in one-letter code: MKKFYSCLPVFLLIGCAQVPLPSSVSKPVQQPGAQKEQLANANSIDECQSLPYVPSDLAKNKSLSNHNADNSASKNSAISSSIFCEKYKQTKEQALTFFQEHPQYMRSKEDEEQLMTEFKKVLLEPGSKNLSIYQTLLAAHERLQAL.

A signal peptide spans Met1 to Gly15. The N-palmitoyl cysteine moiety is linked to residue Cys16. A lipid anchor (S-diacylglycerol cysteine) is attached at Cys16.

Belongs to the InvH family.

Its subcellular location is the cell outer membrane. Functionally, involved in the synthesis of the type III secretion system (T3SS), also called injectisome, which is used to inject bacterial effector proteins into eukaryotic host cells. Pilot protein that is required for the proper localization of the secretin InvG/SctC in the outer membrane. Necessary for efficient adherence and entry of these organisms into cultured epithelial cells. The protein is SPI-1 type 3 secretion system pilotin of Salmonella typhimurium (strain SL1344).